The chain runs to 296 residues: Phosphoribosylaminoimidazole-succinocarboxamide synthase (296 aa).

It belongs to the SAICAR synthetase family.

It catalyses the reaction 5-amino-1-(5-phospho-D-ribosyl)imidazole-4-carboxylate + L-aspartate + ATP = (2S)-2-[5-amino-1-(5-phospho-beta-D-ribosyl)imidazole-4-carboxamido]succinate + ADP + phosphate + 2 H(+). It participates in purine metabolism; IMP biosynthesis via de novo pathway; 5-amino-1-(5-phospho-D-ribosyl)imidazole-4-carboxamide from 5-amino-1-(5-phospho-D-ribosyl)imidazole-4-carboxylate: step 1/2. The polypeptide is Phosphoribosylaminoimidazole-succinocarboxamide synthase (Citrifermentans bemidjiense (strain ATCC BAA-1014 / DSM 16622 / JCM 12645 / Bem) (Geobacter bemidjiensis)).